The sequence spans 550 residues: Methionine--tRNA ligase (550 aa).

The short motif at 13-23 is the 'HIGH' region element; sequence PYANGPLHFGH. Zn(2+) is bound by residues cysteine 145, cysteine 148, cysteine 158, and cysteine 161. The 'KMSKS' region motif lies at 331–335; it reads QFSKS. Lysine 334 contacts ATP.

This sequence belongs to the class-I aminoacyl-tRNA synthetase family. MetG type 1 subfamily. Monomer. Requires Zn(2+) as cofactor.

The protein localises to the cytoplasm. It carries out the reaction tRNA(Met) + L-methionine + ATP = L-methionyl-tRNA(Met) + AMP + diphosphate. In terms of biological role, is required not only for elongation of protein synthesis but also for the initiation of all mRNA translation through initiator tRNA(fMet) aminoacylation. The sequence is that of Methionine--tRNA ligase (metG) from Chlamydia trachomatis serovar D (strain ATCC VR-885 / DSM 19411 / UW-3/Cx).